The sequence spans 273 residues: tRNA pseudouridine synthase B (273 aa).

Residue D38 is the Nucleophile of the active site.

It belongs to the pseudouridine synthase TruB family. Type 1 subfamily.

The enzyme catalyses uridine(55) in tRNA = pseudouridine(55) in tRNA. Its function is as follows. Responsible for synthesis of pseudouridine from uracil-55 in the psi GC loop of transfer RNAs. In Sulfurimonas denitrificans (strain ATCC 33889 / DSM 1251) (Thiomicrospira denitrificans (strain ATCC 33889 / DSM 1251)), this protein is tRNA pseudouridine synthase B.